A 393-amino-acid polypeptide reads, in one-letter code: Fractalkine (393 aa).

Positions 1–24 are cleaved as a signal peptide; sequence MAPSQLAWLLRLAAFFHLCTLLAG. A chemokine and involved in interaction with ITGAV:ITGB3 and ITGA4:ITGB1 region spans residues 25-100; the sequence is QHLGMTKCNI…HQTAALTRNG (76 aa). Residues 25–337 lie on the Extracellular side of the membrane; that stretch reads QHLGMTKCNI…PDSQAATRRQ (313 aa). Cystine bridges form between C32-C58 and C36-C74. The N-linked (GlcNAc...) asparagine glycan is linked to N33. The mucin-like stalk stretch occupies residues 101-337; it reads GKFEKRVDNV…PDSQAATRRQ (237 aa). Disordered stretches follow at residues 114–184 and 213–303; these read ITSA…PQST and EKAT…SGSQ. Polar residues-rich tracts occupy residues 153-172 and 223-240; these read GTSQ…TSKA and ALST…NVGS. A helical membrane pass occupies residues 338 to 358; that stretch reads AVGLLAFLGLLFCLGVAMFAY. Topologically, residues 359-393 are cytoplasmic; the sequence is QSLQGCPRKMAGEMVEGLRYVPRSCGSNSYVLVPV.

This sequence belongs to the intercrine delta family. Monomer. Forms a ternary complex with CX3CR1 and ITGAV:ITGB3 or ITGA4:ITGB1. Post-translationally, a soluble short form may be released by proteolytic cleavage from the long membrane-anchored form. As to expression, highest levels in brain (neurons). Significant levels in kidney, heart, lung and adrenal gland.

It localises to the cell membrane. The protein resides in the secreted. In terms of biological role, chemokine that acts as a ligand for both CX3CR1 and integrins ITGAV:ITGB3 and ITGA4:ITGB1. The CX3CR1-CX3CL1 signaling exerts distinct functions in different tissue compartments, such as immune response, inflammation, cell adhesion and chemotaxis. Regulates leukocyte adhesion and migration processes at the endothelium. Can activate integrins in both a CX3CR1-dependent and CX3CR1-independent manner. In the presence of CX3CR1, activates integrins by binding to the classical ligand-binding site (site 1) in integrins. In the absence of CX3CR1, binds to a second site (site 2) in integrins which is distinct from site 1 and enhances the binding of other integrin ligands to site 1. Functionally, the soluble form is chemotactic for T-cells and monocytes, but not for neutrophils. The membrane-bound form promotes adhesion of those leukocytes to endothelial cells. This Rattus norvegicus (Rat) protein is Fractalkine (Cx3cl1).